A 433-amino-acid chain; its full sequence is Serine hydroxymethyltransferase (433 aa).

Residue 121 to 123 (AHV) participates in (6S)-5,6,7,8-tetrahydrofolate binding. The residue at position 227 (Lys-227) is an N6-(pyridoxal phosphate)lysine. Residue Glu-243 participates in (6S)-5,6,7,8-tetrahydrofolate binding.

The protein belongs to the SHMT family. In terms of assembly, homodimer. Pyridoxal 5'-phosphate is required as a cofactor.

Its subcellular location is the cytoplasm. It participates in amino-acid biosynthesis; glycine biosynthesis; glycine from L-serine: step 1/1. Catalyzes the reversible interconversion of serine and glycine with a modified folate serving as the one-carbon carrier. Also exhibits a pteridine-independent aldolase activity toward beta-hydroxyamino acids, producing glycine and aldehydes, via a retro-aldol mechanism. The chain is Serine hydroxymethyltransferase from Saccharolobus islandicus (strain Y.N.15.51 / Yellowstone #2) (Sulfolobus islandicus).